A 417-amino-acid polypeptide reads, in one-letter code: Candidapepsin-4 (417 aa).

The N-terminal stretch at 1–18 (MFLQNILSVLAFALLIDA) is a signal peptide. A propeptide spans 19–75 (APVKRSTGFVTLDFNVKRSLVDPKDPTVEVKRSPLFLDIEPTEIPVDDTGRNDVGKR) (activation peptide). Positions 89–403 (YSADITIGSN…DLDDRKISMA (315 aa)) constitute a Peptidase A1 domain. D107 is a catalytic residue. C122 and C134 form a disulfide bridge. A glycan (N-linked (GlcNAc...) asparagine) is linked at N137. D293 is an active-site residue. Residues C331 and C369 are joined by a disulfide bond.

Belongs to the peptidase A1 family. In terms of processing, O-glycosylated.

It localises to the secreted. The catalysed reaction is Preferential cleavage at the carboxyl of hydrophobic amino acids, but fails to cleave 15-Leu-|-Tyr-16, 16-Tyr-|-Leu-17 and 24-Phe-|-Phe-25 of insulin B chain. Activates trypsinogen, and degrades keratin.. The polypeptide is Candidapepsin-4 (SAP4) (Candida albicans (strain WO-1) (Yeast)).